The following is a 294-amino-acid chain: Epimerase family protein SDR39U1 (294 aa).

Residues 31-32, 58-59, Glu77, Arg82, and Val160 contribute to the NADP(+) site; these read SR and LA.

The protein belongs to the NAD(P)-dependent epimerase/dehydratase family. SDR39U1 subfamily.

In terms of biological role, putative NADP-dependent oxidoreductase. This Bos taurus (Bovine) protein is Epimerase family protein SDR39U1 (SDR39U1).